A 642-amino-acid chain; its full sequence is RNA polymerase sigma factor RpoD (642 aa).

A disordered region spans residues 199 to 228 (HLETTAPEKPSNDNSDENEDDEESEEDADE). Residues 212–228 (NSDENEDDEESEEDADE) show a composition bias toward acidic residues. Positions 403–473 (MIQANLRLVI…TRSIADQART (71 aa)) are sigma-70 factor domain-2. The short motif at 427-430 (DLIQ) is the Interaction with polymerase core subunit RpoC element. The segment at 482 to 558 (ETINKMNRIS…DANNVAPADA (77 aa)) is sigma-70 factor domain-3. Residues 571–624 (ILESLTPREAKVLRMRFGIDMNTDHTLEEVGRQFDVTRERIRQIEAKALRKLRH) are sigma-70 factor domain-4. Residues 597-616 (LEEVGRQFDVTRERIRQIEA) constitute a DNA-binding region (H-T-H motif).

This sequence belongs to the sigma-70 factor family. RpoD/SigA subfamily. As to quaternary structure, interacts transiently with the RNA polymerase catalytic core.

It is found in the cytoplasm. Functionally, sigma factors are initiation factors that promote the attachment of RNA polymerase to specific initiation sites and are then released. This sigma factor is the primary sigma factor during exponential growth. The chain is RNA polymerase sigma factor RpoD from Neisseria gonorrhoeae.